The sequence spans 363 residues: UDP-N-acetylglucosamine--N-acetylmuramyl-(pentapeptide) pyrophosphoryl-undecaprenol N-acetylglucosamine transferase (363 aa).

UDP-N-acetyl-alpha-D-glucosamine contacts are provided by residues 10–12 (TGG), Asn124, Ser195, Ile249, and Gln294.

The protein belongs to the glycosyltransferase 28 family. MurG subfamily.

It localises to the cell membrane. It carries out the reaction Mur2Ac(oyl-L-Ala-gamma-D-Glu-L-Lys-D-Ala-D-Ala)-di-trans,octa-cis-undecaprenyl diphosphate + UDP-N-acetyl-alpha-D-glucosamine = beta-D-GlcNAc-(1-&gt;4)-Mur2Ac(oyl-L-Ala-gamma-D-Glu-L-Lys-D-Ala-D-Ala)-di-trans,octa-cis-undecaprenyl diphosphate + UDP + H(+). Its pathway is cell wall biogenesis; peptidoglycan biosynthesis. Its function is as follows. Cell wall formation. Catalyzes the transfer of a GlcNAc subunit on undecaprenyl-pyrophosphoryl-MurNAc-pentapeptide (lipid intermediate I) to form undecaprenyl-pyrophosphoryl-MurNAc-(pentapeptide)GlcNAc (lipid intermediate II). This chain is UDP-N-acetylglucosamine--N-acetylmuramyl-(pentapeptide) pyrophosphoryl-undecaprenol N-acetylglucosamine transferase, found in Leuconostoc mesenteroides subsp. mesenteroides (strain ATCC 8293 / DSM 20343 / BCRC 11652 / CCM 1803 / JCM 6124 / NCDO 523 / NBRC 100496 / NCIMB 8023 / NCTC 12954 / NRRL B-1118 / 37Y).